The primary structure comprises 183 residues: Glutathione-regulated potassium-efflux system ancillary protein KefG (183 aa).

The protein belongs to the NAD(P)H dehydrogenase (quinone) family. KefG subfamily. As to quaternary structure, interacts with KefB.

It localises to the cell inner membrane. It carries out the reaction a quinone + NADH + H(+) = a quinol + NAD(+). The catalysed reaction is a quinone + NADPH + H(+) = a quinol + NADP(+). Regulatory subunit of a potassium efflux system that confers protection against electrophiles. Required for full activity of KefB. The protein is Glutathione-regulated potassium-efflux system ancillary protein KefG of Shigella flexneri serotype 5b (strain 8401).